A 147-amino-acid polypeptide reads, in one-letter code: UPF0460 protein in nifX-nifW intergenic region (147 aa).

Belongs to the UPF0460 family.

The protein is UPF0460 protein in nifX-nifW intergenic region of Frankia alni.